A 247-amino-acid chain; its full sequence is uncharacterized protein (247 aa).

The tract at residues 225–247 (LASAPVPPSGSGNSGHRRANLGL) is disordered.

This is an uncharacterized protein from Methanocaldococcus jannaschii (strain ATCC 43067 / DSM 2661 / JAL-1 / JCM 10045 / NBRC 100440) (Methanococcus jannaschii).